Reading from the N-terminus, the 415-residue chain is Lipoyl synthase, apicoplast (415 aa).

An N-terminal signal peptide occupies residues 1–23; that stretch reads MHFGIPSLFYLYILFSIIMRIKC. Residues C153, C158, C164, C179, C183, C186, and S394 each coordinate [4Fe-4S] cluster. One can recognise a Radical SAM core domain in the interval 165–383; it reads WNIGTATIML…KEEGLKMGFK (219 aa).

This sequence belongs to the radical SAM superfamily. Lipoyl synthase family. The cofactor is [4Fe-4S] cluster.

It localises to the plastid. It is found in the apicoplast. The enzyme catalyses [[Fe-S] cluster scaffold protein carrying a second [4Fe-4S](2+) cluster] + N(6)-octanoyl-L-lysyl-[protein] + 2 oxidized [2Fe-2S]-[ferredoxin] + 2 S-adenosyl-L-methionine + 4 H(+) = [[Fe-S] cluster scaffold protein] + N(6)-[(R)-dihydrolipoyl]-L-lysyl-[protein] + 4 Fe(3+) + 2 hydrogen sulfide + 2 5'-deoxyadenosine + 2 L-methionine + 2 reduced [2Fe-2S]-[ferredoxin]. The protein operates within protein modification; protein lipoylation via endogenous pathway; protein N(6)-(lipoyl)lysine from octanoyl-[acyl-carrier-protein]: step 2/2. Its function is as follows. Catalyzes the radical-mediated insertion of two sulfur atoms into the C-6 and C-8 positions of the octanoyl moiety bound to the lipoyl domains of lipoate-dependent enzymes, thereby converting the octanoylated domains into lipoylated derivatives. This chain is Lipoyl synthase, apicoplast, found in Plasmodium falciparum (isolate 3D7).